Here is a 349-residue protein sequence, read N- to C-terminus: Ferredoxin--NADP reductase 1 (349 aa).

Glu36, Lys44, Tyr48, Val88, Leu123, Asp290, and Ser331 together coordinate FAD.

The protein belongs to the ferredoxin--NADP reductase type 2 family. In terms of assembly, homodimer. Requires FAD as cofactor.

The catalysed reaction is 2 reduced [2Fe-2S]-[ferredoxin] + NADP(+) + H(+) = 2 oxidized [2Fe-2S]-[ferredoxin] + NADPH. This is Ferredoxin--NADP reductase 1 from Bacillus cytotoxicus (strain DSM 22905 / CIP 110041 / 391-98 / NVH 391-98).